A 1070-amino-acid chain; its full sequence is MLRNRNEGMSTIPEFSQIQFEGFCRFIDWGLAEELHKFPKIEDTDQEIEFQLFVETYQLAEPLIKERDAVYESLTYSSELYVPAGLIWKPGKDMQEQTVFIGNIPLMSSLGIFIVNGIYRIVINQILQSPGIYYRSELDHNGIFIYTGTIISDWGGRSELEIDRKARIWARVSRKQKISILVSSSAMGSNLREILENVRYPEIFLSFLNERDKKKIGSRENAILEFYQQFACVGGDPVFSESLCRELQKKFFQQRCELGRIGRRNMNRRLNLDIPQNNTFLLPRDVLAAADHLIGMKFGMGTLDDMNHLKNKRIRSVADLLQDQFGLALVRLENVVRGTICGAIRHKLIPTPQNLVTSTPLTTTYESFFGLHPLSQVLDRTNPLTQIVHGRKSSYLGPGGLTGRTASFRIRDIHTSHYGRICPIDTSEGINVGLIGSLAIHARVGPWGSIKTPFYEISERSKRLQLVYLSPSVDEYHMVAAGNSLALNRGIQEEQAVPARYRQEFLTIAWEQIHLRSIFPFQYFSMGASLIPFIEHNDANRALMSSNMQRQAVPLSRSEKCIVGTGLERQAALDSGVSAISEREGKVIYTNTDKIILSGNGDTITIPLVMYQRSNKNTCMHQKTQVSRGKCIKKGQILANGAATVGGELALGKNVLVAYMPWEGYNFEDAVLISERLVYEDIYTSFHIRKYEIQTHVTSQGPERITKEIPHLETHLLRNLDRNGIVMLGSWVETGDILVGKLTPQTAKESSYAPEDRLLRAILGIQVSTSKETCLKLPIGGRGRVIDVRWIQKKGGSSYNPETIRVYISQKREMKVGDKVAGRHGNKGIISKILPRQDMPYLQDGTPVDMVFNPLGVPSRMNVGQIFECSLGLAGDFLGRHYRVAPFDERYEQEASRKLVFSELYEASKQTANPWVFEPEYPGKSRIFDGRTGDPFDQPVLIGKSYILKLIHQVDDKIHGRSSGHYALVTQQPLRGRAKQGGQRVGEMEVWALEGFGVAHILQEMLTYKSDHIRSRQEVLGTTIVGGTIANPGDAPESFRLLVRELRSLALELNHFLLSEKDFQIHRKEA.

The protein belongs to the RNA polymerase beta chain family. As to quaternary structure, in plastids the minimal PEP RNA polymerase catalytic core is composed of four subunits: alpha, beta, beta', and beta''. When a (nuclear-encoded) sigma factor is associated with the core the holoenzyme is formed, which can initiate transcription.

It localises to the plastid. The protein resides in the chloroplast. It catalyses the reaction RNA(n) + a ribonucleoside 5'-triphosphate = RNA(n+1) + diphosphate. DNA-dependent RNA polymerase catalyzes the transcription of DNA into RNA using the four ribonucleoside triphosphates as substrates. This Piper cenocladum (Ant piper) protein is DNA-directed RNA polymerase subunit beta.